The primary structure comprises 178 residues: Nicotinamide-nucleotide adenylyltransferase (178 aa).

It belongs to the archaeal NMN adenylyltransferase family.

The protein resides in the cytoplasm. The catalysed reaction is beta-nicotinamide D-ribonucleotide + ATP + H(+) = diphosphate + NAD(+). It functions in the pathway cofactor biosynthesis; NAD(+) biosynthesis; NAD(+) from nicotinamide D-ribonucleotide: step 1/1. This chain is Nicotinamide-nucleotide adenylyltransferase, found in Caldivirga maquilingensis (strain ATCC 700844 / DSM 13496 / JCM 10307 / IC-167).